A 116-amino-acid chain; its full sequence is Protein Wnt-5a (116 aa).

Residue S1 is the site of O-palmitoleoyl serine; by PORCN attachment. N69 and N83 each carry an N-linked (GlcNAc...) asparagine glycan. C82 and C97 form a disulfide bridge.

This sequence belongs to the Wnt family. Post-translationally, palmitoleoylation is required for efficient binding to frizzled receptors. Depalmitoleoylation leads to Wnt signaling pathway inhibition.

It localises to the secreted. The protein localises to the extracellular space. It is found in the extracellular matrix. In terms of biological role, ligand for members of the frizzled family of seven transmembrane receptors. Can activate or inhibit canonical Wnt signaling, depending on receptor context. Required during embryogenesis for extension of the primary anterior-posterior axis. The protein is Protein Wnt-5a (WNT5A) of Anser caerulescens (Snow goose).